A 329-amino-acid polypeptide reads, in one-letter code: 4-hydroxythreonine-4-phosphate dehydrogenase (329 aa).

Histidine 136 and threonine 137 together coordinate substrate. Residues histidine 166, histidine 211, and histidine 266 each contribute to the a divalent metal cation site. Lysine 274, asparagine 283, and arginine 292 together coordinate substrate.

The protein belongs to the PdxA family. In terms of assembly, homodimer. The cofactor is Zn(2+). Mg(2+) is required as a cofactor. It depends on Co(2+) as a cofactor.

The protein resides in the cytoplasm. It carries out the reaction 4-(phosphooxy)-L-threonine + NAD(+) = 3-amino-2-oxopropyl phosphate + CO2 + NADH. The protein operates within cofactor biosynthesis; pyridoxine 5'-phosphate biosynthesis; pyridoxine 5'-phosphate from D-erythrose 4-phosphate: step 4/5. In terms of biological role, catalyzes the NAD(P)-dependent oxidation of 4-(phosphooxy)-L-threonine (HTP) into 2-amino-3-oxo-4-(phosphooxy)butyric acid which spontaneously decarboxylates to form 3-amino-2-oxopropyl phosphate (AHAP). The protein is 4-hydroxythreonine-4-phosphate dehydrogenase of Neisseria meningitidis serogroup B (strain ATCC BAA-335 / MC58).